The chain runs to 195 residues: Interferon omega-2 (195 aa).

The first 23 residues, 1-23 (MALLPSLLTALVVYELWPCGALG), serve as a signal peptide directing secretion. Cystine bridges form between Cys24/Cys122 and Cys52/Cys162. N-linked (GlcNAc...) asparagine glycosylation occurs at Asn101.

It belongs to the alpha/beta interferon family.

The protein resides in the secreted. The polypeptide is Interferon omega-2 (Equus caballus (Horse)).